The sequence spans 544 residues: NADH-quinone oxidoreductase subunit C/D (544 aa).

The interval 1 to 138 (MLNCDMLIDS…KGQICTETED (138 aa)) is NADH dehydrogenase I subunit C. The segment at 161-544 (MLLNVGPSHP…MNFIAGEFDR (384 aa)) is NADH dehydrogenase I subunit D.

The protein in the N-terminal section; belongs to the complex I 30 kDa subunit family. In the C-terminal section; belongs to the complex I 49 kDa subunit family. As to quaternary structure, NDH-1 is composed of 13 different subunits. Subunits NuoB, CD, E, F, and G constitute the peripheral sector of the complex.

The protein resides in the cell inner membrane. The enzyme catalyses a quinone + NADH + 5 H(+)(in) = a quinol + NAD(+) + 4 H(+)(out). NDH-1 shuttles electrons from NADH, via FMN and iron-sulfur (Fe-S) centers, to quinones in the respiratory chain. The immediate electron acceptor for the enzyme in this species is believed to be ubiquinone. Couples the redox reaction to proton translocation (for every two electrons transferred, four hydrogen ions are translocated across the cytoplasmic membrane), and thus conserves the redox energy in a proton gradient. This is NADH-quinone oxidoreductase subunit C/D from Aliarcobacter butzleri (strain RM4018) (Arcobacter butzleri).